The sequence spans 440 residues: Ribosomal protein uS12 methylthiotransferase RimO (440 aa).

Residues 1–117 (MKVHLTSLGC…VIEAVAGKES (117 aa)) form the MTTase N-terminal domain. The [4Fe-4S] cluster site is built by cysteine 10, cysteine 46, cysteine 80, cysteine 155, cysteine 159, and cysteine 162. In terms of domain architecture, Radical SAM core spans 141 to 371 (CATPHTVYVK…MTAQIDISSR (231 aa)). Positions 374-440 (AKRVGSREPV…SAYDLTGEAQ (67 aa)) constitute a TRAM domain.

It belongs to the methylthiotransferase family. RimO subfamily. [4Fe-4S] cluster is required as a cofactor.

The protein localises to the cytoplasm. It catalyses the reaction L-aspartate(89)-[ribosomal protein uS12]-hydrogen + (sulfur carrier)-SH + AH2 + 2 S-adenosyl-L-methionine = 3-methylsulfanyl-L-aspartate(89)-[ribosomal protein uS12]-hydrogen + (sulfur carrier)-H + 5'-deoxyadenosine + L-methionine + A + S-adenosyl-L-homocysteine + 2 H(+). Catalyzes the methylthiolation of an aspartic acid residue of ribosomal protein uS12. The protein is Ribosomal protein uS12 methylthiotransferase RimO of Desulfosudis oleivorans (strain DSM 6200 / JCM 39069 / Hxd3) (Desulfococcus oleovorans).